A 117-amino-acid chain; its full sequence is Large ribosomal subunit protein uL18 (117 aa).

The protein belongs to the universal ribosomal protein uL18 family. Part of the 50S ribosomal subunit; part of the 5S rRNA/L5/L18/L25 subcomplex. Contacts the 5S and 23S rRNAs.

In terms of biological role, this is one of the proteins that bind and probably mediate the attachment of the 5S RNA into the large ribosomal subunit, where it forms part of the central protuberance. The polypeptide is Large ribosomal subunit protein uL18 (Polynucleobacter necessarius subsp. necessarius (strain STIR1)).